The following is a 186-amino-acid chain: Peptide deformylase (186 aa).

Cys-113 and His-156 together coordinate Fe cation. The active site involves Glu-157. His-160 is a binding site for Fe cation.

This sequence belongs to the polypeptide deformylase family. It depends on Fe(2+) as a cofactor.

It carries out the reaction N-terminal N-formyl-L-methionyl-[peptide] + H2O = N-terminal L-methionyl-[peptide] + formate. In terms of biological role, removes the formyl group from the N-terminal Met of newly synthesized proteins. Requires at least a dipeptide for an efficient rate of reaction. N-terminal L-methionine is a prerequisite for activity but the enzyme has broad specificity at other positions. The protein is Peptide deformylase of Ligilactobacillus salivarius (strain UCC118) (Lactobacillus salivarius).